The chain runs to 220 residues: Adenylate kinase (220 aa).

Residue 12–17 participates in ATP binding; it reads GAGKGT. The NMP stretch occupies residues 32–62; it reads STGDIFRDIVKKENDELGKKIKEIMERGELV. AMP contacts are provided by residues T33, R38, 60-62, 88-91, and Q95; these read ELV and GYPR. The segment at 129 to 166 is LID; it reads ARRICPKCGRIYNLISLPPKEDELCDDCKVKLVQREDD. R130 contributes to the ATP binding site. Zn(2+) is bound by residues C133 and C136. 139–140 lines the ATP pocket; that stretch reads IY. Positions 153 and 156 each coordinate Zn(2+). 2 residues coordinate AMP: R163 and R174. An ATP-binding site is contributed by I202.

It belongs to the adenylate kinase family. In terms of assembly, monomer.

It is found in the cytoplasm. It carries out the reaction AMP + ATP = 2 ADP. Its pathway is purine metabolism; AMP biosynthesis via salvage pathway; AMP from ADP: step 1/1. Catalyzes the reversible transfer of the terminal phosphate group between ATP and AMP. Plays an important role in cellular energy homeostasis and in adenine nucleotide metabolism. The polypeptide is Adenylate kinase (Thermotoga petrophila (strain ATCC BAA-488 / DSM 13995 / JCM 10881 / RKU-1)).